The following is a 236-amino-acid chain: 7-cyano-7-deazaguanine synthase (236 aa).

13–23 provides a ligand contact to ATP; the sequence is FSGGQDSTVCL. The Zn(2+) site is built by cysteine 200, cysteine 215, cysteine 218, and cysteine 221.

It belongs to the QueC family. It depends on Zn(2+) as a cofactor.

The enzyme catalyses 7-carboxy-7-deazaguanine + NH4(+) + ATP = 7-cyano-7-deazaguanine + ADP + phosphate + H2O + H(+). It participates in purine metabolism; 7-cyano-7-deazaguanine biosynthesis. Catalyzes the ATP-dependent conversion of 7-carboxy-7-deazaguanine (CDG) to 7-cyano-7-deazaguanine (preQ(0)). This Parvibaculum lavamentivorans (strain DS-1 / DSM 13023 / NCIMB 13966) protein is 7-cyano-7-deazaguanine synthase.